We begin with the raw amino-acid sequence, 272 residues long: Sordarin/hypoxysordarin biosynthesis cluster protein P (272 aa).

N-linked (GlcNAc...) asparagine glycans are attached at residues Asn-6 and Asn-23. Transmembrane regions (helical) follow at residues 31–51 (FLAS…LLFL) and 67–87 (AYHM…VDLA). Asn-208 is a glycosylation site (N-linked (GlcNAc...) asparagine).

Its subcellular location is the membrane. It functions in the pathway antibiotic biosynthesis. Functionally, part of the gene cluster that mediates the biosynthesis of sordarin and hypoxysordarin, glycoside antibiotics with a unique tetracyclic diterpene aglycone structure. First, the geranylgeranyl diphosphate synthase sdnC constructs GGDP from farnesyl diphosphate and isopentenyl diphosphate. The diterpene cyclase sdnA then catalyzes the cyclization of GGDP to afford cycloaraneosene. Cycloaraneosene is then hydroxylated four times by the putative cytochrome P450 monooxygenases sdnB, sdnE, sdnF and sdnH to give a hydroxylated cycloaraneosene derivative such as cycloaraneosene-8,9,13,19-tetraol. Although the order of the hydroxylations is unclear, at least C8, C9 and C13 of the cycloaraneosene skeleton are hydroxylated before the sordaricin formation. Dehydration of the 13-hydroxy group of the hydroxylated cycloaraneosene derivative might be catalyzed by an unassigned hypothetical protein such as sdnG and sdnP to construct the cyclopentadiene moiety. The FAD-dependent oxidoreductase sdnN is proposed to catalyze the oxidation at C9 of the hydroxylated cycloaraneosene derivative and also catalyze the Baeyer-Villiger oxidation to give the lactone intermediate. The presumed lactone intermediate would be hydrolyzed to give an acrolein moiety and a carboxylate moiety. Then, [4+2]cycloaddition would occur between the acrolein moiety and the cyclopentadiene moiety to give sordaricin. SdnN might also be involved in the [4+2]cycloaddition after the hypothesized oxidation to accommodate the oxidized product and prompt the [4+2]cycloaddition. GDP-6-deoxy-D-altrose may be biosynthesized from GDP-D-mannose by the putative GDP-mannose-4,6-dehydratase sdnI and the short-chain dehydrogenase sdnK. The glycosyltransferase sdnJ catalyzes the attachment of 6-deoxy-D-altrose onto the 19-hydroxy group of sordaricin to give 4'-O-demethylsordarin. The methyltransferase sdnD would complete the biosynthesis of sordarin. Sordarin can be further modified into hypoxysordarin. The unique acyl chain at the 3'-hydroxy group of hypoxysordarin would be constructed by an iterative type I PKS sdnO and the trans-acting polyketide methyltransferase sdnL. SdnL would be responsible for the introduction of an alpha-methyl group of the polyketide chain. Alternatively, the beta-lactamase-like protein sdnR might be responsible for the cleavage and transfer of the polyketide chain from the PKS sdnO to sordarin. Two putative cytochrome P450 monooxygenases, sdnQ and sdnT, might catalyze the epoxidations of the polyketide chain to complete the biosynthesis of hypoxysordarin. Transcriptional regulators sdnM and sdnS are presumably encoded for the transcriptional regulation of the expression of the sdn gene cluster. The polypeptide is Sordarin/hypoxysordarin biosynthesis cluster protein P (Sordaria araneosa (Pleurage araneosa)).